The following is a 465-amino-acid chain: Probable citrate synthase, mitochondrial (465 aa).

Catalysis depends on residues histidine 303, histidine 349, and aspartate 404.

It belongs to the citrate synthase family. As to quaternary structure, homodimer.

The protein localises to the mitochondrion matrix. The catalysed reaction is oxaloacetate + acetyl-CoA + H2O = citrate + CoA + H(+). It functions in the pathway carbohydrate metabolism; tricarboxylic acid cycle; isocitrate from oxaloacetate: step 1/2. The sequence is that of Probable citrate synthase, mitochondrial from Glossina morsitans morsitans (Savannah tsetse fly).